The following is a 201-amino-acid chain: Recombination protein RecR (201 aa).

The segment at 57–74 (CRICGFITSKDDDPCVIC) adopts a C4-type zinc-finger fold. Positions 82–178 (SKIFVVENSQ…KVTRLARGLS (97 aa)) constitute a Toprim domain.

It belongs to the RecR family.

May play a role in DNA repair. It seems to be involved in an RecBC-independent recombinational process of DNA repair. It may act with RecF and RecO. The chain is Recombination protein RecR from Oenococcus oeni (strain ATCC BAA-331 / PSU-1).